The sequence spans 211 residues: MRVRNISNAKELLKEYKEYVAAPQLFKEQWHTYFENQNPIHIEIGMGKGQFIRTLAKLNPNINYIGLEKVEELVLKSVRSIEAEEICNISLINWNAVKLEEILGEGEIERIYLNFSDPWPKARHDKRRLTHHGFLDIYQKLLKDHGEIHLKTDSKALFEFSLEQFTQKNFTLVEVIEDLHGSTDKEIAKTEYEEKFIAEGKPIYKCIARIE.

Residues glutamate 43, glutamate 68, asparagine 95, and aspartate 117 each coordinate S-adenosyl-L-methionine. The active site involves aspartate 117. Residues lysine 121, aspartate 153, and 190 to 193 (TEYE) each bind substrate.

Belongs to the class I-like SAM-binding methyltransferase superfamily. TrmB family.

The catalysed reaction is guanosine(46) in tRNA + S-adenosyl-L-methionine = N(7)-methylguanosine(46) in tRNA + S-adenosyl-L-homocysteine. It participates in tRNA modification; N(7)-methylguanine-tRNA biosynthesis. Functionally, catalyzes the formation of N(7)-methylguanine at position 46 (m7G46) in tRNA. The polypeptide is tRNA (guanine-N(7)-)-methyltransferase (Alkaliphilus oremlandii (strain OhILAs) (Clostridium oremlandii (strain OhILAs))).